The sequence spans 151 residues: Putative pre-16S rRNA nuclease (151 aa).

Belongs to the YqgF nuclease family.

The protein resides in the cytoplasm. Could be a nuclease involved in processing of the 5'-end of pre-16S rRNA. In Methylococcus capsulatus (strain ATCC 33009 / NCIMB 11132 / Bath), this protein is Putative pre-16S rRNA nuclease.